We begin with the raw amino-acid sequence, 298 residues long: Aspartate carbamoyltransferase catalytic subunit (298 aa).

Carbamoyl phosphate contacts are provided by arginine 50 and threonine 51. Lysine 79 contacts L-aspartate. Arginine 100, histidine 128, and glutamine 131 together coordinate carbamoyl phosphate. Residues arginine 160 and arginine 221 each coordinate L-aspartate. Leucine 260 and proline 261 together coordinate carbamoyl phosphate.

The protein belongs to the aspartate/ornithine carbamoyltransferase superfamily. ATCase family. Heterooligomer of catalytic and regulatory chains.

The enzyme catalyses carbamoyl phosphate + L-aspartate = N-carbamoyl-L-aspartate + phosphate + H(+). It functions in the pathway pyrimidine metabolism; UMP biosynthesis via de novo pathway; (S)-dihydroorotate from bicarbonate: step 2/3. In terms of biological role, catalyzes the condensation of carbamoyl phosphate and aspartate to form carbamoyl aspartate and inorganic phosphate, the committed step in the de novo pyrimidine nucleotide biosynthesis pathway. This chain is Aspartate carbamoyltransferase catalytic subunit, found in Methanoculleus marisnigri (strain ATCC 35101 / DSM 1498 / JR1).